Reading from the N-terminus, the 68-residue chain is Metallothionein-3 (68 aa).

Residue M1 is modified to N-acetylmethionine. The segment at 1 to 30 (MDPETCPCPSGGSCTCADSCKCEGCKCTSC) is beta. Positions 6, 8, 14, 16, 20, 22, 25, 27, and 30 each coordinate a divalent metal cation. An alpha region spans residues 31–68 (KKSCCSCCPAECEKCAKDCVCKGGEGAEAEAEKCSCCE). A Phosphoserine modification is found at S33. C34, C35, C37, C38, C42, C45, C49, C51, C64, C66, and C67 together coordinate a divalent metal cation.

This sequence belongs to the metallothionein superfamily. Type 1 family.

Its function is as follows. Binds heavy metals. Contains five zinc and one copper atoms per polypeptide chain and only a negligible amount of cadmium. The sequence is that of Metallothionein-3 (MT3) from Macaca fascicularis (Crab-eating macaque).